Consider the following 238-residue polypeptide: UPF0758 protein Dtpsy_2777 (238 aa).

The 123-residue stretch at 116 to 238 (VFDSPQAVQH…ALSMAEQGLV (123 aa)) folds into the MPN domain. The Zn(2+) site is built by His-187, His-189, and Asp-200. The short motif at 187–200 (HNHPSGSVQPSRAD) is the JAMM motif element.

Belongs to the UPF0758 family.

This chain is UPF0758 protein Dtpsy_2777, found in Acidovorax ebreus (strain TPSY) (Diaphorobacter sp. (strain TPSY)).